We begin with the raw amino-acid sequence, 541 residues long: Arginine-containing cyclodipeptide synthase avaA (541 aa).

A Conserved DDXXE motif motif is present at residues 428–432 (DDIAE).

Belongs to the arginine-containing cyclodipeptide synthase family.

It carries out the reaction L-tryptophyl-tRNA(Trp) + L-arginyl-tRNA(Arg) = cyclo(L-arginyl-L-tryptophyl) + tRNA(Trp) + tRNA(Arg) + H(+). It participates in secondary metabolite biosynthesis. In terms of biological role, arginine-containing cyclodipeptide synthase; part of the cluster that mediates the biosynthesis of a highly modified cyclo-arginine-tryptophan dipeptide (cRW). Within the pathway, avaA acts as the scaffold-generating enzyme and is responsible for formation of the cyclo-Arg-Trp diketopiperazine (cRW) from L-arginyl-tRNA(Arg) + L-tryptophanyl-tRNA(Trp). AvaB then acts as a multifunctional flavoenzyme that is responsible for generating the cyclo-Arg-formylkynurenine DKP, which can be deformylated by avaC. AvaB then catalyzes an additional N-oxidation followed by cyclization and dehydration. The next step is an N-acetylation of the guanidine group catalyzed by the arginine N-acetyltransferase AvaD. The role of the additional enzymes identified within the ava cluster still have to be determined. In Aspergillus versicolor, this protein is Arginine-containing cyclodipeptide synthase avaA.